Reading from the N-terminus, the 433-residue chain is Tol-Pal system protein TolB (433 aa).

An N-terminal signal peptide occupies residues 1-21 (MRNLLRGMLVVICCMAGIAAA).

This sequence belongs to the TolB family. In terms of assembly, the Tol-Pal system is composed of five core proteins: the inner membrane proteins TolA, TolQ and TolR, the periplasmic protein TolB and the outer membrane protein Pal. They form a network linking the inner and outer membranes and the peptidoglycan layer.

It localises to the periplasm. In terms of biological role, part of the Tol-Pal system, which plays a role in outer membrane invagination during cell division and is important for maintaining outer membrane integrity. The chain is Tol-Pal system protein TolB from Pseudomonas fluorescens (strain ATCC BAA-477 / NRRL B-23932 / Pf-5).